The chain runs to 190 residues: Elongation factor P (190 aa).

K34 bears the N6-(3,6-diaminohexanoyl)-5-hydroxylysine mark.

It belongs to the elongation factor P family. May be beta-lysylated on the epsilon-amino group of Lys-34 by the combined action of EpmA and EpmB, and then hydroxylated on the C5 position of the same residue by EpmC (if this protein is present). Lysylation is critical for the stimulatory effect of EF-P on peptide-bond formation. The lysylation moiety may extend toward the peptidyltransferase center and stabilize the terminal 3-CCA end of the tRNA. Hydroxylation of the C5 position on Lys-34 may allow additional potential stabilizing hydrogen-bond interactions with the P-tRNA.

Its subcellular location is the cytoplasm. The protein operates within protein biosynthesis; polypeptide chain elongation. Involved in peptide bond synthesis. Alleviates ribosome stalling that occurs when 3 or more consecutive Pro residues or the sequence PPG is present in a protein, possibly by augmenting the peptidyl transferase activity of the ribosome. Modification of Lys-34 is required for alleviation. In Psychrobacter arcticus (strain DSM 17307 / VKM B-2377 / 273-4), this protein is Elongation factor P.